We begin with the raw amino-acid sequence, 361 residues long: Putative agmatine deiminase (361 aa).

Catalysis depends on Cys354, which acts as the Amidino-cysteine intermediate.

Belongs to the agmatine deiminase family.

It carries out the reaction agmatine + H2O = N-carbamoylputrescine + NH4(+). The polypeptide is Putative agmatine deiminase (Streptococcus pneumoniae (strain 70585)).